A 224-amino-acid chain; its full sequence is Urease accessory protein UreF (224 aa).

This sequence belongs to the UreF family. UreD, UreF and UreG form a complex that acts as a GTP-hydrolysis-dependent molecular chaperone, activating the urease apoprotein by helping to assemble the nickel containing metallocenter of UreC. The UreE protein probably delivers the nickel.

The protein localises to the cytoplasm. Its function is as follows. Required for maturation of urease via the functional incorporation of the urease nickel metallocenter. This chain is Urease accessory protein UreF, found in Methylorubrum populi (strain ATCC BAA-705 / NCIMB 13946 / BJ001) (Methylobacterium populi).